Consider the following 509-residue polypeptide: Group 3 secretory phospholipase A2 (509 aa).

Residues 1 to 19 form the signal peptide; the sequence is MGVQAGLFGMLGFLGVALG. Residues 123–149 form a disordered region; it reads ESPAGARKKRAAGQSGVPGGGHQREKR. Residues 150–291 form a phospholipase A2-like region; that stretch reads GWTMPGTLWC…SWSSRATSPT (142 aa). The Ca(2+) site is built by W158, G160, and G162. 4 disulfide bridges follow: C159-C181, C180-C220, C187-C213, and C211-C244. A glycan (N-linked (GlcNAc...) asparagine) is linked at N167. H184 is a catalytic residue. Residue D185 coordinates Ca(2+). D214 is a catalytic residue. The N-linked (GlcNAc...) asparagine glycan is linked to N280. A disordered region spans residues 283–354; the sequence is WSSRATSPTP…LQGPQGGLKP (72 aa). Over residues 284–296 the composition is skewed to low complexity; sequence SSRATSPTPSSRS. The segment covering 302–322 has biased composition (basic residues); that stretch reads PRQKQHLRKGPPHQKGSKRPS. 3 N-linked (GlcNAc...) asparagine glycosylation sites follow: N325, N396, and N439. The interval 458-482 is disordered; that stretch reads QQRRHQLQDKGTDERQPWPSEPLRG. A compositionally biased stretch (basic and acidic residues) spans 463 to 473; the sequence is QLQDKGTDERQ.

It belongs to the phospholipase A2 family. Ca(2+) is required as a cofactor. N-glycosylation does not affect the catalytic activity, but is required for proper secretion. A nonglycosylated form is observed in several cell types. Post-translationally, in several cell types, the N- and C-termini are cleaved off. As to expression, expressed in kidney, heart, liver, and skeletal muscle. Also present in placenta and peripheral blood leukocytes. Not detected in colon, thymus, spleen and small intestine. In lung, expressed in bronchial epithelial cells and alveolar macrophages, but scarcely detected in alveolar epithelium, arterial walls and interstitial fibroblasts (at protein level). In joints of osteoarthritis and rheumatoid arthritis, expressed in endothelial cells (at protein level). In normal heart, detected in some vessels. In myocardial tissues with acute infarction, expressed in vascular endothelial cells adjacent to cardiomyocytes and those in lesions with granulation. Expression in cardiomyocytes is scarce (at protein level). In uterus, breast and colon cancers, detected in tumor cells and neighboring microvascular endothelium, but not in normal glandular tissues (at protein level). Expressed in dermal resting mast cells (at protein level) and pulmonary mast cells. Expressed in neuronal fibers (at protein level). Highly expressed in dorsal root ganglia neurons (at protein level). Expressed in Purkinje cells in cerebellum (at protein level). In stomach is preferentially expressed in neuronal fibers and in microvascular endothelium. Sparsely expressed in normal aorta (at protein level). Highly expressed in macrophages and smooth muscle cells in aorta with atheroma.

It localises to the secreted. It is found in the cell membrane. Its subcellular location is the cytoplasm. The protein resides in the cytoskeleton. The protein localises to the microtubule organizing center. It localises to the centrosome. It is found in the centriole. Its subcellular location is the recycling endosome. It carries out the reaction a 1,2-diacyl-sn-glycero-3-phosphocholine + H2O = a 1-acyl-sn-glycero-3-phosphocholine + a fatty acid + H(+). The catalysed reaction is 1-hexadecanoyl-2-(9Z,12Z-octadecadienoyl)-sn-glycero-3-phosphocholine + H2O = (9Z,12Z)-octadecadienoate + 1-hexadecanoyl-sn-glycero-3-phosphocholine + H(+). It catalyses the reaction 1-hexadecanoyl-2-(5Z,8Z,11Z,14Z-eicosatetraenoyl)-sn-glycero-3-phosphocholine + H2O = 1-hexadecanoyl-sn-glycero-3-phosphocholine + (5Z,8Z,11Z,14Z)-eicosatetraenoate + H(+). The enzyme catalyses 1-hexadecanoyl-2-(9Z,12Z-octadecadienoyl)-sn-glycero-3-phosphoethanolamine + H2O = 1-hexadecanoyl-sn-glycero-3-phosphoethanolamine + (9Z,12Z)-octadecadienoate + H(+). It carries out the reaction 1-hexadecanoyl-2-(5Z,8Z,11Z,14Z-eicosatetraenoyl)-sn-glycero-3-phosphoethanolamine + H2O = 1-hexadecanoyl-sn-glycero-3-phosphoethanolamine + (5Z,8Z,11Z,14Z)-eicosatetraenoate + H(+). With respect to regulation, arachidonic acid release is markedly increased by glypican, a glycosylphosphatidylinositol-anchored heparan sulfate proteoglycan. Functionally, secretory calcium-dependent phospholipase A2 that primarily targets extracellular phospholipids. Hydrolyzes the ester bond of the fatty acyl group attached at sn-2 position of phospholipids without apparent head group selectivity. Contributes to phospholipid remodeling of low-density lipoprotein (LDL) and high-density lipoprotein (HDL) particles. Hydrolyzes LDL phospholipids releasing unsaturated fatty acids that regulate macrophage differentiation toward foam cells. May act in an autocrine and paracrine manner. Secreted by immature mast cells, acts on nearby fibroblasts upstream to PTDGS to synthesize prostaglandin D2 (PGD2), which in turn promotes mast cell maturation and degranulation via PTGDR. Secreted by epididymal epithelium, acts on immature sperm cells within the duct, modulating the degree of unsaturation of the fatty acyl components of phosphatidylcholines required for acrosome assembly and sperm cell motility. Facilitates the replacement of fatty acyl chains in phosphatidylcholines in sperm membranes from omega-6 and omega-9 to omega-3 polyunsaturated fatty acids (PUFAs). Coupled to lipoxygenase pathway, may process omega-6 PUFAs to generate oxygenated lipid mediators in the male reproductive tract. At pericentrosomal preciliary compartment, negatively regulates ciliogenesis likely by regulating endocytotic recycling of ciliary membrane protein. Coupled to cyclooxygenase pathway provides arachidonate to generate prostaglandin E2 (PGE2), a potent immunomodulatory lipid in inflammation and tumorigenesis. At colonic epithelial barrier, preferentially hydrolyzes phospholipids having arachidonate and docosahexaenoate at sn-2 position, contributing to the generation of oxygenated metabolites involved in colonic stem cell homeostasis. Releases C16:0 and C18:0 lysophosphatidylcholine subclasses from neuron plasma membranes and promotes neurite outgrowth and neuron survival. The protein is Group 3 secretory phospholipase A2 of Homo sapiens (Human).